A 211-amino-acid polypeptide reads, in one-letter code: MSASNATHTHLSSSGGASQMATTQGHLTASAITLNFRELIKEPKGLEDAANYLFQGLLDDVVAGIFIEIHHLRKTGNLTALDGVGEENAESAYRICEMPNLDIFGISTAKKPMDCTCPHCDRLVAAARFAPHLEKCMGMGRISSRIASRRLATKEGASASSSSTSTYIQSGGNTGGTDDEDDVDWSSDKRKKKSTQNSRNNGSKKNNGKIF.

The segment at 115-136 (CTCPHCDRLVAAARFAPHLEKC) adopts an SGF11-type zinc-finger fold. The segment at 153–211 (TKEGASASSSSTSTYIQSGGNTGGTDDEDDVDWSSDKRKKKSTQNSRNNGSKKNNGKIF) is disordered. Residues 157–166 (ASASSSSTST) are compositionally biased toward low complexity. Position 187 is a phosphoserine (Ser187). The segment covering 197–211 (NSRNNGSKKNNGKIF) has biased composition (low complexity).

It belongs to the SGF11 family. Component of some SAGA transcription coactivator-HAT complexes, at least composed of Ada2b, not/nonstop, Pcaf/Gcn5, Sgf11 and Spt3. Within the SAGA complex, Sgf11, e(y)2, and not/nonstop form an additional subcomplex of SAGA called the DUB module (deubiquitination module). Interacts directly with not/nonstop. Interacts with the AMEX complex component xmas-2. Interacts with Cbp80; important for promoter recruitment of Sgf11 that is not associated with the DUB module.

The protein localises to the nucleus. It is found in the nucleoplasm. Its subcellular location is the cytoplasm. In terms of biological role, component of the transcription regulatory histone acetylation (HAT) complex SAGA, a multiprotein complex that activates transcription by remodeling chromatin and mediating histone acetylation and deubiquitination. Within the SAGA complex, participates in a subcomplex that specifically deubiquitinates histone H2B. The SAGA complex is recruited to specific gene promoters by activators, where it is required for transcription. Required for nuclear receptor-mediated transactivation. Binds independently on SAGA to promoters in an RNA-dependent manner. Binds to mRNA and is essential for total mRNA export from the nucleus. Required to counteract heterochromatin silencing. Controls the development of neuronal connectivity in visual system by being required for accurate axon targeting in the optic lobe. Required for expression of ecdysone-induced genes such as br/broad. In Drosophila mojavensis (Fruit fly), this protein is SAGA-associated factor 11 homolog.